Consider the following 539-residue polypeptide: F-box only protein 31 (539 aa).

The segment at 11–53 (GPSRGCRRRQQRRGPAETAAADSEPDTDPEEERIEASAGVGGG) is disordered. Serine 33 carries the phosphoserine modification. Serine 33 is subject to Phosphoserine; by PKB/AKT1. Residues 33–43 (SEPDTDPEEER) show a composition bias toward acidic residues. At threonine 37 the chain carries Phosphothreonine. Positions 64–69 (RCSLLE) match the D box motif. The 47-residue stretch at 64-110 (RCSLLELPPELLVEIFASLPGTDLPSLAQVCTKFRRILHTDTIWRRR) folds into the F-box domain. Residues cysteine 206, histidine 214, cysteine 230, and histidine 236 each contribute to the Zn(2+) site. Serine 278 is subject to Phosphoserine; by ATM. The short motif at 297–299 (DDL) is the DDL motif element. A compositionally biased stretch (basic and acidic residues) spans 377–397 (VRQEQQEGGHEAGEGRGRQGP). Residues 377 to 446 (VRQEQQEGGH…PAQCGQGQPF (70 aa)) are disordered. A Phosphothreonine; by MTOR modification is found at threonine 419. Serine 480 bears the Phosphoserine mark.

The protein belongs to the FBXO31 family. In terms of assembly, part of a SCF (SKP1-cullin-F-box) protein ligase complex SCF(FBXO31) composed of CUL1, SKP1, RBX1 and FBXO31. Interacts (when phosphorylated at Ser-33) with CDC20, promoting ubiquitination by the APC/C complex. In terms of processing, phosphorylation at Ser-278 by ATM following gamma-irradiation results in its stabilization. Phosphorylation at Thr-419 and Ser-480 in absence of stress promotes its ubiquitination and degradation by the SCF(FBXO46) complex. Phosphorylation at Ser-33 by AKT1 promotes association with CDC20 and ubiquitination by the APC/C complex. Ubiquitinated by the SCF(FBXO46) complex in absence of stress, promoting its degradation. Ubiquitinated by the APC/C complex following phosphorylation at Ser-33, leading to its degradation by the proteasome. Highly expressed in brain. Expressed at moderate levels in most tissues, except bone marrow.

It localises to the cytoplasm. It is found in the cytoskeleton. The protein resides in the microtubule organizing center. The protein localises to the centrosome. The protein operates within protein modification; protein ubiquitination. Its function is as follows. Substrate-recognition component of the SCF(FBXO31) protein ligase complex, which specifically mediates the ubiquitination of proteins amidated at their C-terminus in response to oxidative stress, leading to their degradation by the proteasome. FBXO31 specifically recognizes and binds C-terminal peptides bearing an amide: C-terminal amidation in response to oxidative stress takes place following protein fragmentation. The SCF(FBXO31) also plays a role in G1 arrest following DNA damage by mediating ubiquitination of phosphorylated cyclin-D1 (CCND1), promoting its degradation by the proteasome, resulting in G1 arrest. The SCF(FBXO31) complex is however not a major regulator of CCND1 stability during the G1/S transition. In response to genotoxic stress, the SCF(FBXO31) complex directs ubiquitination and degradation of phosphorylated MDM2, thereby promoting p53/TP53-mediated DNA damage response. SCF(FBXO31) complex is required for genomic integrity by catalyzing ubiquitination and degradation of cyclin-A (CCNA1 and/or CCNA2) during the G1 phase. In response to genotoxic stress, the SCF(FBXO31) complex directs ubiquitination and degradation of phosphorylated FBXO46 and MAP2K6. SCF(FBXO31) complex promotes ubiquitination and degradation of CDT1 during the G2 phase to prevent re-replication. The SCF(FBXO31) complex also mediates ubiquitination and degradation of DUSP6, OGT and PARD6A. In Homo sapiens (Human), this protein is F-box only protein 31.